Reading from the N-terminus, the 154-residue chain is Large ribosomal subunit protein uL22c (154 aa).

This sequence belongs to the universal ribosomal protein uL22 family. As to quaternary structure, part of the 50S ribosomal subunit.

The protein resides in the plastid. It localises to the chloroplast. Its function is as follows. This protein binds specifically to 23S rRNA. In terms of biological role, the globular domain of the protein is located near the polypeptide exit tunnel on the outside of the subunit, while an extended beta-hairpin is found that lines the wall of the exit tunnel in the center of the 70S ribosome. The chain is Large ribosomal subunit protein uL22c (rpl22) from Helianthus annuus (Common sunflower).